The following is a 154-amino-acid chain: Protein FAM162A (154 aa).

The interval 76-102 (RFKKEDEIPETVSLEMLDAAKNKMRVK) is required for proapoptotic activity. A helical transmembrane segment spans residues 103 to 120 (ISYLMIALTVVGCIFMVI).

Belongs to the UPF0389 family. Interacts with HSP90AB1; HSP90AB1 is essential for FAM162A mitochondrial localization and pro-apoptotic activity. Interacts with VDAC2; the interaction is probably involved in inducing mitochondrial permeability transition.

It localises to the mitochondrion membrane. In terms of biological role, proposed to be involved in regulation of apoptosis; the exact mechanism may differ between cell types/tissues. May be involved in hypoxia-induced cell death of transformed cells implicating cytochrome C release and caspase activation (such as CASP9) and inducing mitochondrial permeability transition. May be involved in hypoxia-induced cell death of neuronal cells probably by promoting release of AIFM1 from mitochondria to cytoplasm and its translocation to the nucleus; however, the involvement of caspases has been reported conflictingly. In Homo sapiens (Human), this protein is Protein FAM162A (FAM162A).